Reading from the N-terminus, the 161-residue chain is Phosphopantetheine adenylyltransferase (161 aa).

Threonine 11 provides a ligand contact to substrate. ATP-binding positions include 11-12 (TF) and histidine 19. Substrate is bound by residues lysine 43, threonine 75, and arginine 89. Residues 90–92 (GLR), glutamate 100, and 125–131 (YSFLSSS) contribute to the ATP site.

The protein belongs to the bacterial CoaD family. Homohexamer. It depends on Mg(2+) as a cofactor.

It is found in the cytoplasm. The enzyme catalyses (R)-4'-phosphopantetheine + ATP + H(+) = 3'-dephospho-CoA + diphosphate. Its pathway is cofactor biosynthesis; coenzyme A biosynthesis; CoA from (R)-pantothenate: step 4/5. Reversibly transfers an adenylyl group from ATP to 4'-phosphopantetheine, yielding dephospho-CoA (dPCoA) and pyrophosphate. The chain is Phosphopantetheine adenylyltransferase from Listeria welshimeri serovar 6b (strain ATCC 35897 / DSM 20650 / CCUG 15529 / CIP 8149 / NCTC 11857 / SLCC 5334 / V8).